The primary structure comprises 153 residues: Peptidoglycan-associated lipoprotein (153 aa).

Residues 1-19 (MNKFVKSLLVAGSVAALAA) form the signal peptide. Residue Cys20 is the site of N-palmitoyl cysteine attachment. Residue Cys20 is the site of S-diacylglycerol cysteine attachment. The 114-residue stretch at 40 to 153 (SVADLQQRYN…SKNRRAVLAY (114 aa)) folds into the OmpA-like domain. Peptidoglycan binding stretches follow at residues 55 to 56 (FD) and 97 to 101 (YNIAL).

The protein belongs to the Pal lipoprotein family. As to quaternary structure, the Tol-Pal system is composed of five core proteins: the inner membrane proteins TolA, TolQ and TolR, the periplasmic protein TolB and the outer membrane protein Pal. They form a network linking the inner and outer membranes and the peptidoglycan layer.

The protein localises to the cell outer membrane. Functionally, part of the Tol-Pal system, which plays a role in outer membrane invagination during cell division and is important for maintaining outer membrane integrity. In Haemophilus influenzae (strain ATCC 51907 / DSM 11121 / KW20 / Rd), this protein is Peptidoglycan-associated lipoprotein.